The sequence spans 402 residues: Tryptophan synthase beta chain 2 (402 aa).

Lys97 bears the N6-(pyridoxal phosphate)lysine mark.

The protein belongs to the TrpB family. In terms of assembly, tetramer of two alpha and two beta chains. It depends on pyridoxal 5'-phosphate as a cofactor.

It catalyses the reaction (1S,2R)-1-C-(indol-3-yl)glycerol 3-phosphate + L-serine = D-glyceraldehyde 3-phosphate + L-tryptophan + H2O. Its pathway is amino-acid biosynthesis; L-tryptophan biosynthesis; L-tryptophan from chorismate: step 5/5. The beta subunit is responsible for the synthesis of L-tryptophan from indole and L-serine. This is Tryptophan synthase beta chain 2 (trpB2) from Wolinella succinogenes (strain ATCC 29543 / DSM 1740 / CCUG 13145 / JCM 31913 / LMG 7466 / NCTC 11488 / FDC 602W) (Vibrio succinogenes).